The sequence spans 679 residues: Glycine--tRNA ligase beta subunit (679 aa).

This sequence belongs to the class-II aminoacyl-tRNA synthetase family. In terms of assembly, tetramer of two alpha and two beta subunits.

Its subcellular location is the cytoplasm. It carries out the reaction tRNA(Gly) + glycine + ATP = glycyl-tRNA(Gly) + AMP + diphosphate. In Streptococcus pyogenes serotype M12 (strain MGAS9429), this protein is Glycine--tRNA ligase beta subunit.